Consider the following 539-residue polypeptide: Lysosomal cobalamin transport escort protein LMBD1 (539 aa).

Residues 1-7 (MATGSTE) are Extracellular-facing. The helical transmembrane segment at 8–28 (LLIGWCIFGVLLLAILAFCWV) threads the bilayer. Residues 29-47 (YVRKYQSHQESEVISTITA) lie on the Cytoplasmic side of the membrane. The helical transmembrane segment at 48–68 (ISSLAIALITSALLPVDIFLV) threads the bilayer. Over 69–98 (SFMKNHNGTFKDWAESNTTRLQIENTVLIG) the chain is Extracellular. N-linked (GlcNAc...) asparagine glycosylation is found at N75 and N85. The helical transmembrane segment at 99–119 (YYTLYSIILFCVFLWIPFVYF) threads the bilayer. Residues 120-142 (YYEEKDDTDGSQCSQIANAFKYT) lie on the Cytoplasmic side of the membrane. Residues 143 to 163 (SGFILVCSCLLLIGAFAPLDI) traverse the membrane as a helical segment. The Extracellular portion of the chain corresponds to 164–186 (HTNKNSTDLDKIKLLFLELGSSN). N168 carries an N-linked (GlcNAc...) asparagine glycan. A helical transmembrane segment spans residues 187–207 (GLAALSFSISSLTLIGMLAAI). At 208 to 303 (TYTAYGMSAL…KCCIVIRPFK (96 aa)) the chain is on the cytoplasmic side. A helical membrane pass occupies residues 304–324 (IIWGILFILVALLFIVSLFLS). The Extracellular segment spans residues 325–362 (NLDKALHSAGIDSGFIIFGTNLTNPLNMLLPVLQTVFP). N-linked (GlcNAc...) asparagine glycosylation occurs at N345. The helical transmembrane segment at 363–383 (LDYIFITIITMYFIFTSMAGI) threads the bilayer. At 384–406 (RNMGIWFFWIRLYKIRRRRTRPQ) the chain is on the cytoplasmic side. A helical transmembrane segment spans residues 407-427 (ALLFLCMILLLIVLHTSYMIY). Over 428 to 484 (SLAPQYVMYGSQKYLWENNSTQETAIGNSSASVLKDCDASAPEDQCTVTRTYLFLHK) the chain is Extracellular. N-linked (GlcNAc...) asparagine glycans are attached at residues N445, N446, and N455. The chain crosses the membrane as a helical span at residues 485–505 (FWFFSSIYYFGNWAFIVVFVI). Over 506-539 (GLIVSCCKGKKSVIEGEVEDDDSDLSDDEEHPYA) the chain is Cytoplasmic.

Belongs to the LIMR family. LMBRD1 subfamily.

The protein resides in the endoplasmic reticulum membrane. It is found in the lysosome membrane. The protein localises to the cell membrane. Its function is as follows. Lysosomal membrane chaperone required to export cobalamin (vitamin B12) from the lysosome to the cytosol, allowing its conversion to cofactors. Targets ABCD4 transporter from the endoplasmic reticulum to the lysosome. Then forms a complex with lysosomal ABCD4 and cytoplasmic MMACHC to transport cobalamin across the lysosomal membrane. May play a role in mediating and regulating the internalization of the insulin receptor. The protein is Lysosomal cobalamin transport escort protein LMBD1 (lmbrd1) of Xenopus tropicalis (Western clawed frog).